The following is a 339-amino-acid chain: MRVYYDRDADINLIKGKKVVIIGYGSQGHAHALNLKDSGVKDVAIALRKGSATAQKAEAAGFKVMEVAEAAKWADVMMMLTPDELQGDIYREHLHDNMKQGAALLFAHGLNVHFNLIDPRADLDVLMIAPKGPGHTVRGEYLKGGGVPCLIAIHKDSSGNAHDLGLSYASAVGGGRAGIIETTFREECETDLFGEQVVLCGGLVELIKGGFETLVEAGYAPEMAYFECLHEVKLIVDLIYEGGIANMNYSISNTAEYGEYVTGPRIVTSETKKEMKKVLEDIQNGIFTRNWMLENKVNQTSFKATRAKLAEHQIEEVGAKLREMMPWIKKGALVDKSKN.

Positions 1–182 constitute a KARI N-terminal Rossmann domain; the sequence is MRVYYDRDAD…GGGRAGIIET (182 aa). Residues 24 to 27, arginine 48, serine 51, threonine 53, and 83 to 86 contribute to the NADP(+) site; these read YGSQ and DELQ. Histidine 108 is a catalytic residue. An NADP(+)-binding site is contributed by glycine 134. The region spanning 183–328 is the KARI C-terminal knotted domain; it reads TFREECETDL…AKLREMMPWI (146 aa). Residues aspartate 191, glutamate 195, glutamate 227, and glutamate 231 each contribute to the Mg(2+) site. Residue serine 252 coordinates substrate.

This sequence belongs to the ketol-acid reductoisomerase family. Mg(2+) serves as cofactor.

It catalyses the reaction (2R)-2,3-dihydroxy-3-methylbutanoate + NADP(+) = (2S)-2-acetolactate + NADPH + H(+). The catalysed reaction is (2R,3R)-2,3-dihydroxy-3-methylpentanoate + NADP(+) = (S)-2-ethyl-2-hydroxy-3-oxobutanoate + NADPH + H(+). The protein operates within amino-acid biosynthesis; L-isoleucine biosynthesis; L-isoleucine from 2-oxobutanoate: step 2/4. Its pathway is amino-acid biosynthesis; L-valine biosynthesis; L-valine from pyruvate: step 2/4. Involved in the biosynthesis of branched-chain amino acids (BCAA). Catalyzes an alkyl-migration followed by a ketol-acid reduction of (S)-2-acetolactate (S2AL) to yield (R)-2,3-dihydroxy-isovalerate. In the isomerase reaction, S2AL is rearranged via a Mg-dependent methyl migration to produce 3-hydroxy-3-methyl-2-ketobutyrate (HMKB). In the reductase reaction, this 2-ketoacid undergoes a metal-dependent reduction by NADPH to yield (R)-2,3-dihydroxy-isovalerate. In Rhodopseudomonas palustris (strain BisA53), this protein is Ketol-acid reductoisomerase (NADP(+)).